The following is a 61-amino-acid chain: Conotoxin Am14.1 (61 aa).

2 consecutive propeptides follow at residues 1–19 (MLSV…HLPR) and 52–61 (KRDLDLFTDQ).

Mostly non-hydroxylated. Post-translationally, contains 2 disulfide bonds. As to expression, expressed by the venom duct.

It localises to the secreted. Functionally, probable toxin that inhibits ion channels. The sequence is that of Conotoxin Am14.1 from Conus amadis (Amadis cone).